The chain runs to 362 residues: Prostaglandin E2 receptor EP2 subtype (362 aa).

At 1 to 24 (MDNFLNDSKLMEDCKSRQWLLSGE) the chain is on the extracellular side. A glycan (N-linked (GlcNAc...) asparagine) is linked at Asn6. Residues 25–48 (SPAISSVMFSAGVLGNLIALALLA) traverse the membrane as a helical segment. Topologically, residues 49-66 (RRWRGDTGCSAGSRTSIS) are cytoplasmic. Residues 67 to 92 (LFHVLVTELVLTDLLGTCLISPVVLA) form a helical membrane-spanning segment. Residues 93-112 (SYSRNQTLVALAPESHACTY) lie on the Extracellular side of the membrane. A disulfide bridge connects residues Cys110 and Cys188. The chain crosses the membrane as a helical span at residues 113-133 (FAFTMTFFSLATMLMLFAMAL). The Cytoplasmic segment spans residues 134–152 (ERYLSIGYPYFYRRHLSRR). Residues 153 to 177 (GGLAVLPVIYGASLLFCSLPLLNYG) traverse the membrane as a helical segment. The Extracellular portion of the chain corresponds to 178–199 (EYVQYCPGTWCFIRHGRTAYLQ). Residues 200–224 (LYATMLLLLIVAVLACNISVILNLI) traverse the membrane as a helical segment. Residues 225–262 (RMHRRSRRSRCGLSGSSLRGPGSRRRGERTSMAEETDH) are Cytoplasmic-facing. Residues 234 to 255 (RCGLSGSSLRGPGSRRRGERTS) form a disordered region. Low complexity predominate over residues 235-245 (CGLSGSSLRGP). The chain crosses the membrane as a helical span at residues 263–286 (LILLAIMTITFAICSLPFTIFAYM). Over 287–299 (DETSSLKEKWDLR) the chain is Extracellular. A helical transmembrane segment spans residues 300 to 323 (ALRFLSVNSIIDPWVFAILRPPVL). Topologically, residues 324-362 (RLMRSVLCCRTSLRTQEAQQTSCSTQSSASKQTDLCGQL) are cytoplasmic.

It belongs to the G-protein coupled receptor 1 family.

The protein resides in the cell membrane. Receptor for prostaglandin E2 (PGE2). The activity of this receptor is mediated by G(s) proteins that stimulate adenylate cyclase. The subsequent raise in intracellular cAMP is responsible for the relaxing effect of this receptor on smooth muscle. The sequence is that of Prostaglandin E2 receptor EP2 subtype (Ptger2) from Mus musculus (Mouse).